Here is a 477-residue protein sequence, read N- to C-terminus: Ribulose bisphosphate carboxylase large chain (477 aa).

The propeptide occupies 1–2 (MS). Pro3 carries the post-translational modification N-acetylproline. Lys14 carries the N6,N6,N6-trimethyllysine modification. Asn123 and Thr173 together coordinate substrate. Lys175 acts as the Proton acceptor in catalysis. A substrate-binding site is contributed by Lys177. Positions 201, 203, and 204 each coordinate Mg(2+). Lys201 carries the post-translational modification N6-carboxylysine. His294 (proton acceptor) is an active-site residue. Residues Arg295, His327, and Ser379 each contribute to the substrate site.

The protein belongs to the RuBisCO large chain family. Type I subfamily. Heterohexadecamer of 8 large chains and 8 small chains; disulfide-linked. The disulfide link is formed within the large subunit homodimers. Mg(2+) serves as cofactor. The disulfide bond which can form in the large chain dimeric partners within the hexadecamer appears to be associated with oxidative stress and protein turnover.

The protein localises to the plastid. Its subcellular location is the chloroplast. The catalysed reaction is 2 (2R)-3-phosphoglycerate + 2 H(+) = D-ribulose 1,5-bisphosphate + CO2 + H2O. It catalyses the reaction D-ribulose 1,5-bisphosphate + O2 = 2-phosphoglycolate + (2R)-3-phosphoglycerate + 2 H(+). Its function is as follows. RuBisCO catalyzes two reactions: the carboxylation of D-ribulose 1,5-bisphosphate, the primary event in carbon dioxide fixation, as well as the oxidative fragmentation of the pentose substrate in the photorespiration process. Both reactions occur simultaneously and in competition at the same active site. This Agrostis stolonifera (Creeping bentgrass) protein is Ribulose bisphosphate carboxylase large chain.